Here is a 636-residue protein sequence, read N- to C-terminus: Fructose-1,6-bisphosphatase class 3 (636 aa).

The protein belongs to the FBPase class 3 family. Mn(2+) serves as cofactor.

It catalyses the reaction beta-D-fructose 1,6-bisphosphate + H2O = beta-D-fructose 6-phosphate + phosphate. Its pathway is carbohydrate biosynthesis; gluconeogenesis. The protein is Fructose-1,6-bisphosphatase class 3 of Streptococcus gordonii (strain Challis / ATCC 35105 / BCRC 15272 / CH1 / DL1 / V288).